Reading from the N-terminus, the 843-residue chain is Protein P (843 aa).

Positions 1–177 (MPLSYQHFRK…FCGSPYSWEQ (177 aa)) are terminal protein domain (TP). Residues 178-346 (ELQHGRLVFQ…YCLSHIVNLL (169 aa)) are spacer. Positions 347-690 (EDWGPCTEHG…YMNLYPVARQ (344 aa)) are polymerase/reverse transcriptase domain (RT). One can recognise a Reverse transcriptase domain in the interval 357 to 600 (EHHIRIPRTP…YSLNFMGYVI (244 aa)). Residues D429, D551, and D552 each contribute to the Mg(2+) site.

Belongs to the hepadnaviridae P protein family.

The catalysed reaction is DNA(n) + a 2'-deoxyribonucleoside 5'-triphosphate = DNA(n+1) + diphosphate. The enzyme catalyses Endonucleolytic cleavage to 5'-phosphomonoester.. With respect to regulation, activated by host HSP70 and HSP40 in vitro to be able to bind the epsilon loop of the pgRNA. Because deletion of the RNase H region renders the protein partly chaperone-independent, the chaperones may be needed indirectly to relieve occlusion of the RNA-binding site by this domain. Inhibited by several reverse-transcriptase inhibitors: Lamivudine, Adefovir and Entecavir. Its function is as follows. Multifunctional enzyme that converts the viral RNA genome into dsDNA in viral cytoplasmic capsids. This enzyme displays a DNA polymerase activity that can copy either DNA or RNA templates, and a ribonuclease H (RNase H) activity that cleaves the RNA strand of RNA-DNA heteroduplexes in a partially processive 3'- to 5'-endonucleasic mode. Neo-synthesized pregenomic RNA (pgRNA) are encapsidated together with the P protein, and reverse-transcribed inside the nucleocapsid. Initiation of reverse-transcription occurs first by binding the epsilon loop on the pgRNA genome, and is initiated by protein priming, thereby the 5'-end of (-)DNA is covalently linked to P protein. Partial (+)DNA is synthesized from the (-)DNA template and generates the relaxed circular DNA (RC-DNA) genome. After budding and infection, the RC-DNA migrates in the nucleus, and is converted into a plasmid-like covalently closed circular DNA (cccDNA). The activity of P protein does not seem to be necessary for cccDNA generation, and is presumably released from (+)DNA by host nuclear DNA repair machinery. The protein is Protein P of Homo sapiens (Human).